The primary structure comprises 36 residues: MARITLRQLLDHAAEHGYGVPAFQHQQYGAGACIME.

This Nitrobacter vulgaris protein is Fructose-1,6-/sedoheptulose-1,7-bisphosphate aldolase (cbbA).